Consider the following 122-residue polypeptide: ATP-dependent Clp protease adapter protein ClpS (122 aa).

The protein belongs to the ClpS family. As to quaternary structure, binds to the N-terminal domain of the chaperone ClpA.

Involved in the modulation of the specificity of the ClpAP-mediated ATP-dependent protein degradation. The sequence is that of ATP-dependent Clp protease adapter protein ClpS from Pseudomonas fluorescens (strain SBW25).